The primary structure comprises 272 residues: HMP-PP phosphatase (272 aa).

The Nucleophile role is filled by D8. Mg(2+) contacts are provided by D8, D10, and D212.

This sequence belongs to the HAD-like hydrolase superfamily. Cof family. Requires Mg(2+) as cofactor.

It catalyses the reaction 4-amino-2-methyl-5-(diphosphooxymethyl)pyrimidine + H2O = 4-amino-2-methyl-5-(phosphooxymethyl)pyrimidine + phosphate + H(+). Functionally, catalyzes the hydrolysis of 4-amino-2-methyl-5-hydroxymethylpyrimidine pyrophosphate (HMP-PP) to 4-amino-2-methyl-5-hydroxymethylpyrimidine phosphate (HMP-P). The chain is HMP-PP phosphatase from Escherichia coli (strain UTI89 / UPEC).